Reading from the N-terminus, the 60-residue chain is Large ribosomal subunit protein bL32c (60 aa).

Belongs to the bacterial ribosomal protein bL32 family.

Its subcellular location is the plastid. The protein resides in the chloroplast. The protein is Large ribosomal subunit protein bL32c of Psilotum nudum (Whisk fern).